The following is a 729-amino-acid chain: Catalase-peroxidase 1 (729 aa).

The segment at residues 98-226 (WHSAGSYRIA…LAAVMMGLIY (129 aa)) is a cross-link (tryptophyl-tyrosyl-methioninium (Trp-Tyr) (with M-252)). Histidine 99 acts as the Proton acceptor in catalysis. Positions 226-252 (YVNPEGVDGNPDPLRTAKDIRETFARM) form a cross-link, tryptophyl-tyrosyl-methioninium (Tyr-Met) (with W-98). Histidine 267 contacts heme b.

This sequence belongs to the peroxidase family. Peroxidase/catalase subfamily. As to quaternary structure, homodimer or homotetramer. Heme b serves as cofactor. In terms of processing, formation of the three residue Trp-Tyr-Met cross-link is important for the catalase, but not the peroxidase activity of the enzyme.

The enzyme catalyses H2O2 + AH2 = A + 2 H2O. The catalysed reaction is 2 H2O2 = O2 + 2 H2O. In terms of biological role, bifunctional enzyme with both catalase and broad-spectrum peroxidase activity. This chain is Catalase-peroxidase 1, found in Cellvibrio japonicus (strain Ueda107) (Pseudomonas fluorescens subsp. cellulosa).